The primary structure comprises 178 residues: Epididymal-specific lipocalin-9 (178 aa).

A signal peptide spans 1–16; it reads MVLLLVLGLVLSLATA. N-linked (GlcNAc...) asparagine glycans are attached at residues Asn-46, Asn-68, and Asn-129. Cys-83 and Cys-176 are disulfide-bonded.

The protein belongs to the calycin superfamily. Lipocalin family. As to expression, expressed in epididymis. Not detected in all other tissues tested.

It is found in the secreted. This Mus musculus (Mouse) protein is Epididymal-specific lipocalin-9 (Lcn9).